Consider the following 416-residue polypeptide: Serine hydroxymethyltransferase (416 aa).

Residues leucine 121 and 125-127 contribute to the (6S)-5,6,7,8-tetrahydrofolate site; that span reads GHL. N6-(pyridoxal phosphate)lysine is present on lysine 229. Residues glutamate 245 and 354–356 each bind (6S)-5,6,7,8-tetrahydrofolate; that span reads SPF.

This sequence belongs to the SHMT family. Homodimer. Requires pyridoxal 5'-phosphate as cofactor.

Its subcellular location is the cytoplasm. It catalyses the reaction (6R)-5,10-methylene-5,6,7,8-tetrahydrofolate + glycine + H2O = (6S)-5,6,7,8-tetrahydrofolate + L-serine. Its pathway is one-carbon metabolism; tetrahydrofolate interconversion. It participates in amino-acid biosynthesis; glycine biosynthesis; glycine from L-serine: step 1/1. Catalyzes the reversible interconversion of serine and glycine with tetrahydrofolate (THF) serving as the one-carbon carrier. This reaction serves as the major source of one-carbon groups required for the biosynthesis of purines, thymidylate, methionine, and other important biomolecules. Also exhibits THF-independent aldolase activity toward beta-hydroxyamino acids, producing glycine and aldehydes, via a retro-aldol mechanism. This Aliivibrio salmonicida (strain LFI1238) (Vibrio salmonicida (strain LFI1238)) protein is Serine hydroxymethyltransferase.